A 324-amino-acid polypeptide reads, in one-letter code: Pepsin-2B (324 aa).

The Peptidase A1 domain maps to 14-321; it reads YYGVISIGTP…DRTNNKVGFA (308 aa). Residue aspartate 32 is part of the active site. An intrachain disulfide couples cysteine 45 to cysteine 50. The segment at 86–109 is disordered; it reads QDTVSVGGGSDPNQELGESQTEPG. A compositionally biased stretch (polar residues) spans 96-107; the sequence is DPNQELGESQTE. A disulfide bond links cysteine 206 and cysteine 209. Aspartate 214 is an active-site residue. Residues cysteine 247 and cysteine 280 are joined by a disulfide bond.

Belongs to the peptidase A1 family.

The sequence is that of Pepsin-2B from Gadus morhua (Atlantic cod).